Reading from the N-terminus, the 390-residue chain is MPSLRTERRSFGMETPRHSSFRMAEVLYVLSCGGQLEHPHMINVQYPVHQPGPTLRDVKTRLIALRGRGMPDSFSWSYKRNYKDTFIWCDLFDDNFILPLSESGEYALKATKRFDASQVKYLRPPRRSENLEAEGDVSMVVKKGLVLISDTGSVTSNRTMELNKQLMNSLSHSRSAAAVRNNEHSDVSSSDTHYSYEDVIERKDYPARCKSNSGATKRGKASVTPKQCHPSSRPAYWEFSPQGNRTGREDSLMTIGLTKHVVEENEGPTTPRAPARRRTWKKEIDKITIFRESNNSESSDDEQPSVQAETHVSKLSKSGGSYSAAPEDLFLYILRKATRLGSFKPRVCTEVDVVDSTQSKTKMLFRSKTKDEVNRLLYHSPLKQDQSIKK.

The interval 22–115 is DIX-like oligomerization domain; sequence RMAEVLYVLS…YALKATKRFD (94 aa). 2 disordered regions span residues 210–247 and 291–321; these read KSNS…NRTG and RESN…SGGS. Residues 304 to 321 show a composition bias toward polar residues; that stretch reads PSVQAETHVSKLSKSGGS.

Belongs to the SOSEKI family. In terms of assembly, homodimer. Forms long polymer filaments with other SOKs proteins polymers crucial for polar localization and biological activity.

It is found in the cell membrane. SOSEKI proteins locally interpret global polarity cues and can influence cell division orientation to coordinate cell polarization relative to body axes. The polypeptide is Protein SOSEKI 4 (Physcomitrium patens (Spreading-leaved earth moss)).